The following is a 96-amino-acid chain: Putative membrane protein insertion efficiency factor (96 aa).

The disordered stretch occupies residues 68–96 (DPVPEHFPARHPRPQGSPPTDHPPTDQPS). Over residues 82-96 (QGSPPTDHPPTDQPS) the composition is skewed to pro residues.

This sequence belongs to the UPF0161 family.

It is found in the cell membrane. In terms of biological role, could be involved in insertion of integral membrane proteins into the membrane. This is Putative membrane protein insertion efficiency factor from Deinococcus radiodurans (strain ATCC 13939 / DSM 20539 / JCM 16871 / CCUG 27074 / LMG 4051 / NBRC 15346 / NCIMB 9279 / VKM B-1422 / R1).